The following is a 298-amino-acid chain: Mimecan (298 aa).

The signal sequence occupies residues 1–19 (METVHSTFLLLLFVPLTQQ). A glycan (N-linked (GlcNAc...) (keratan sulfate) asparagine) is linked at asparagine 88. 7 LRR repeats span residues 112 to 131 (DAVPPLPKESAYLYARFNKI), 132 to 155 (KKLTAKDFADMPNLRRLDFTGNLI), 156 to 179 (EDIEDGTFSKLSLLEELTLAENQL), 180 to 199 (LRLPVLPPKLTLLNAKHNKI), 200 to 225 (KSKGIKANTFKKLNKLSFLYLDHNDL), 226 to 246 (ESVPPNLPESLRVIHLQFNSI), and 247 to 277 (SSLTDDTFCKANDTRYIRERIEEIRLEGNPI). A disulfide bridge connects residues cysteine 255 and cysteine 288. N-linked (GlcNAc...) (keratan sulfate) asparagine glycosylation is present at asparagine 258.

This sequence belongs to the small leucine-rich proteoglycan (SLRP) family. SLRP class III subfamily. In terms of processing, contains keratan sulfate.

The protein resides in the secreted. Its subcellular location is the extracellular space. The protein localises to the extracellular matrix. Its function is as follows. Induces bone formation in conjunction with TGF-beta-1 or TGF-beta-2. This Mus musculus (Mouse) protein is Mimecan (Ogn).